Here is a 503-residue protein sequence, read N- to C-terminus: Aspartyl/glutamyl-tRNA(Asn/Gln) amidotransferase subunit B (503 aa).

This sequence belongs to the GatB/GatE family. GatB subfamily. In terms of assembly, heterotrimer of A, B and C subunits.

The catalysed reaction is L-glutamyl-tRNA(Gln) + L-glutamine + ATP + H2O = L-glutaminyl-tRNA(Gln) + L-glutamate + ADP + phosphate + H(+). The enzyme catalyses L-aspartyl-tRNA(Asn) + L-glutamine + ATP + H2O = L-asparaginyl-tRNA(Asn) + L-glutamate + ADP + phosphate + 2 H(+). Its function is as follows. Allows the formation of correctly charged Asn-tRNA(Asn) or Gln-tRNA(Gln) through the transamidation of misacylated Asp-tRNA(Asn) or Glu-tRNA(Gln) in organisms which lack either or both of asparaginyl-tRNA or glutaminyl-tRNA synthetases. The reaction takes place in the presence of glutamine and ATP through an activated phospho-Asp-tRNA(Asn) or phospho-Glu-tRNA(Gln). The chain is Aspartyl/glutamyl-tRNA(Asn/Gln) amidotransferase subunit B from Nocardia farcinica (strain IFM 10152).